Here is a 323-residue protein sequence, read N- to C-terminus: Transcription initiation factor IIB 7 (323 aa).

Over residues 1-16 (MTRSTRQRERETAAKQ) the composition is skewed to basic and acidic residues. A disordered region spans residues 1–35 (MTRSTRQRERETAAKQEEEEDSEEGVRECPECGSD). A TFIIB-type zinc finger spans residues 24 to 56 (EGVRECPECGSDNLVKSSDRAELVCNDCGLVVE). 4 residues coordinate Zn(2+): cysteine 29, cysteine 32, cysteine 48, and cysteine 51. 2 consecutive repeat copies span residues 142–225 (SEID…SQEL) and 236–317 (KYVP…EQIE).

This sequence belongs to the TFIIB family.

Functionally, stabilizes TBP binding to an archaeal box-A promoter. Also responsible for recruiting RNA polymerase II to the pre-initiation complex (DNA-TBP-TFIIB). This Halobacterium salinarum (strain ATCC 700922 / JCM 11081 / NRC-1) (Halobacterium halobium) protein is Transcription initiation factor IIB 7.